The chain runs to 300 residues: Cell surface glycoprotein CD200 receptor 1-A (300 aa).

Residues 1–24 (MEIAGKAVCVFLLLAIIKLRRSEG) form the signal peptide. An Ig-like V-type domain is found at 25 to 124 (INRVSANLGH…GNFHRLYHLT (100 aa)). Residues 25–213 (INRVSANLGH…SINCSSSYRD (189 aa)) lie on the Extracellular side of the membrane. 2 cysteine pairs are disulfide-bonded: C40–C108 and C143–C192. N-linked (GlcNAc...) asparagine glycans are attached at residues N45, N76, N105, N171, N200, and N206. One can recognise an Ig-like C2-type domain in the interval 122–206 (HLTVIVAPRM…ATLNETKSIN (85 aa)). A helical membrane pass occupies residues 214–234 (LILCIAIILSFLIIITFMAVI). Over 235-300 (YYLKLHGCRF…NLPQGQSPAT (66 aa)) the chain is Cytoplasmic.

It belongs to the CD200R family. Glycosylated. Post-translationally, phosphorylated. Highly expressed in macrophages, peripheral blood lymphocytes (PBL) and peripheral blood mononuclear cells (PBMC). Weakly expressed in bursa, thymus, spleen, liver and brain.

It is found in the membrane. The protein resides in the secreted. The chain is Cell surface glycoprotein CD200 receptor 1-A (CD200R1A) from Gallus gallus (Chicken).